A 339-amino-acid polypeptide reads, in one-letter code: ATPase GET3 (339 aa).

34-41 serves as a coordination point for ATP; sequence KGGVGKTT. D63 is a catalytic residue. Residues E243 and N270 each coordinate ATP. Residues C281 and C284 each coordinate Zn(2+).

It belongs to the arsA ATPase family. Homodimer.

Its subcellular location is the cytoplasm. It localises to the endoplasmic reticulum. In terms of biological role, ATPase required for the post-translational delivery of tail-anchored (TA) proteins to the endoplasmic reticulum. Recognizes and selectively binds the transmembrane domain of TA proteins in the cytosol. This complex then targets to the endoplasmic reticulum by membrane-bound receptors, where the tail-anchored protein is released for insertion. This process is regulated by ATP binding and hydrolysis. ATP binding drives the homodimer towards the closed dimer state, facilitating recognition of newly synthesized TA membrane proteins. ATP hydrolysis is required for insertion. Subsequently, the homodimer reverts towards the open dimer state, lowering its affinity for the membrane-bound receptor, and returning it to the cytosol to initiate a new round of targeting. This is ATPase GET3 from Coccidioides immitis (strain RS) (Valley fever fungus).